The chain runs to 120 residues: Large ribosomal subunit protein uL18 (120 aa).

This sequence belongs to the universal ribosomal protein uL18 family. Part of the 50S ribosomal subunit; part of the 5S rRNA/L5/L18/L25 subcomplex. Contacts the 5S and 23S rRNAs.

This is one of the proteins that bind and probably mediate the attachment of the 5S RNA into the large ribosomal subunit, where it forms part of the central protuberance. The sequence is that of Large ribosomal subunit protein uL18 from Rhizobium etli (strain ATCC 51251 / DSM 11541 / JCM 21823 / NBRC 15573 / CFN 42).